Reading from the N-terminus, the 164-residue chain is C-type lectin 1 (164 aa).

The signal sequence occupies residues Met-1–Ala-23. Disulfide bonds link Cys-27-Cys-38, Cys-55-Cys-154, and Cys-129-Cys-146. In terms of domain architecture, C-type lectin spans Tyr-34–Gln-155. N-linked (GlcNAc...) asparagine glycans are attached at residues Asn-35 and Asn-109. Residues Glu-119–Asn-121 carry the Mannose-binding motif. Ca(2+) is bound by residues Glu-127, Asn-142, and Asp-143.

It belongs to the true venom lectin family. As to expression, expressed by the venom gland.

The protein resides in the secreted. Functionally, mannose-binding lectin which recognizes specific carbohydrate structures and agglutinates a variety of animal cells by binding to cell-surface glycoproteins and glycolipids. May be a calcium-dependent lectin. The chain is C-type lectin 1 from Hydrophis hardwickii (Hardwick's spine-bellied seasnake).